The primary structure comprises 114 residues: MNKQDPKRSNEPPVWLMFSAGGTISAICFPVLILILGILLPLGLIPMDNIIVFAHTWLGKLVILAVTIFPMWAGMHRVHHGLHDLKIHLPASGWLFYGLSTLYSIVVLFAVIAL.

Transmembrane regions (helical) follow at residues isoleucine 27–methionine 47, isoleucine 50–proline 70, and tryptophan 94–leucine 114.

The protein belongs to the FrdD family. As to quaternary structure, part of an enzyme complex containing four subunits: a flavoprotein (FrdA), an iron-sulfur protein (FrdB), and two hydrophobic anchor proteins (FrdC and FrdD).

The protein resides in the cell inner membrane. Functionally, anchors the catalytic components of the fumarate reductase complex to the cell membrane, binds quinones. The polypeptide is Fumarate reductase subunit D (Haemophilus ducreyi (strain 35000HP / ATCC 700724)).